The sequence spans 323 residues: Protoheme IX farnesyltransferase (323 aa).

8 consecutive transmembrane segments (helical) span residues 28-48, 50-70, 101-121, 122-142, 150-170, 178-198, 235-255, and 282-302; these read IIPLLLITTAAAMWIASEGRV, LFTLFITLIGGTLAAAAAQVM, FIFAVILAILSFSLFALFVNL, LSGLLAMSGIVFYMLVYTHLL, IVIGGAAGSIPPLVGWAAVTG, ILFAIIFLWTPPHFWALALMI, FLLVYPLGVSGAVYGGIAIIL, and FSIFYLMLLCTAMVIDSLPLT.

It belongs to the UbiA prenyltransferase family. Protoheme IX farnesyltransferase subfamily.

It localises to the cell inner membrane. It carries out the reaction heme b + (2E,6E)-farnesyl diphosphate + H2O = Fe(II)-heme o + diphosphate. It participates in porphyrin-containing compound metabolism; heme O biosynthesis; heme O from protoheme: step 1/1. Its function is as follows. Converts heme B (protoheme IX) to heme O by substitution of the vinyl group on carbon 2 of heme B porphyrin ring with a hydroxyethyl farnesyl side group. The sequence is that of Protoheme IX farnesyltransferase from Rippkaea orientalis (strain PCC 8801 / RF-1) (Cyanothece sp. (strain PCC 8801)).